The chain runs to 307 residues: Ribonuclease HII (307 aa).

The region spanning E44–L235 is the RNase H type-2 domain. Positions 50, 51, and 144 each coordinate a divalent metal cation. The segment at A241–P307 is disordered. Over residues A250–G280 the composition is skewed to low complexity. The segment covering R287–D296 has biased composition (basic and acidic residues).

This sequence belongs to the RNase HII family. Mn(2+) serves as cofactor. Requires Mg(2+) as cofactor.

It is found in the cytoplasm. It catalyses the reaction Endonucleolytic cleavage to 5'-phosphomonoester.. In terms of biological role, endonuclease that specifically degrades the RNA of RNA-DNA hybrids. This is Ribonuclease HII from Acidothermus cellulolyticus (strain ATCC 43068 / DSM 8971 / 11B).